The primary structure comprises 1170 residues: Glucose transport transcription regulator RGT1 (1170 aa).

Residues 1–22 (MNELNTVSTNSSDSTKDGGTSN) show a composition bias toward polar residues. Disordered stretches follow at residues 1 to 47 (MNEL…SRAC) and 77 to 149 (SFDR…SNSV). The zn(2)-C6 fungal-type DNA-binding region spans 47–76 (CDQCRKKKIKCDYKDEKGVCSNCQRNGDRC). Residues 99 to 108 (RTNEIQDHNN) are compositionally biased toward basic and acidic residues. Residues 113 to 138 (NTFDNSNNTLNNNTGNSGDNGINSNT) are compositionally biased toward low complexity. The span at 139–149 (VPSTPSRSNSV) shows a compositional bias: polar residues. Residues Ser-202, Ser-205, Ser-208, and Ser-229 each carry the phosphoserine modification. Disordered stretches follow at residues 226–254 (VQQS…SASG), 269–288 (APTD…IPSL), 293–323 (SNSL…LQQG), 384–506 (AQQT…HPMT), and 944–977 (NYRP…SAAP). Over residues 239–250 (SGNANGSVTGSG) the composition is skewed to low complexity. Residues 271 to 280 (TDDHNGEQTR) show a composition bias toward basic and acidic residues. 2 positions are modified to phosphoserine: Ser-283 and Ser-284. Low complexity-rich tracts occupy residues 293-302 (SNSLLLGGQP), 309-323 (QQSQ…LQQG), and 385-397 (QQTQ…QVPQ). 2 positions are modified to phosphoserine: Ser-410 and Ser-414. Positions 411-422 (APVSVTLSTDRL) are enriched in polar residues. A compositionally biased stretch (low complexity) spans 424-444 (GNENNNGEINNNNGSNNSGSS). Over residues 445-457 (KDTSQHSQESVTT) the composition is skewed to polar residues. Over residues 473 to 488 (STKKRRKSYVSKKTKP) the composition is skewed to basic residues. The segment covering 493 to 506 (SISITSKDSAHPMT) has biased composition (polar residues). Ser-1130 is subject to Phosphoserine.

The protein belongs to the EDS1/RGT1 family. Glucose-induced phosphorylation regulates the DNA-binding activity. Hyperphosphorylation in cells growing on high levels of glucose does prevents DNA-binding and dephosphorylation restores DNA-binding ability.

The protein localises to the nucleus. Its subcellular location is the cytoplasm. Glucose-responsive transcription factor that regulates expression of several glucose transporter (HXT) genes in response to glucose. In the absence of glucose, it functions as a transcriptional repressor, whereas high concentrations of glucose cause it to function as a transcriptional activator. In cells growing on low levels of glucose, has a neutral role, neither repressing nor activating transcription. Binds the consensus binding site sequence 5'-CGGANNA-3', of which multiple copies are present in all HXT promoters regulated by RGT1. The chain is Glucose transport transcription regulator RGT1 (RGT1) from Saccharomyces cerevisiae (strain JAY291) (Baker's yeast).